The primary structure comprises 89 residues: Large ribosomal subunit protein bL27 (89 aa).

The disordered stretch occupies residues 1 to 21; that stretch reads MAHKKSGGSSSNGRDSESKRL.

Belongs to the bacterial ribosomal protein bL27 family.

The polypeptide is Large ribosomal subunit protein bL27 (Caulobacter vibrioides (strain NA1000 / CB15N) (Caulobacter crescentus)).